The following is a 392-amino-acid chain: S-adenosylmethionine synthase (392 aa).

Residue glutamate 10 coordinates Mg(2+). Histidine 16 contacts ATP. Glutamate 44 serves as a coordination point for K(+). The L-methionine site is built by glutamate 57 and glutamine 100. Residues aspartate 168 to lysine 170, serine 236 to phenylalanine 239, aspartate 247, arginine 253 to lysine 254, alanine 270, lysine 274, and lysine 278 each bind ATP. Residue aspartate 247 coordinates L-methionine. Lysine 278 contributes to the L-methionine binding site.

It belongs to the AdoMet synthase family. In terms of assembly, homotetramer. Mn(2+) is required as a cofactor. It depends on Mg(2+) as a cofactor. Requires Co(2+) as cofactor. K(+) serves as cofactor.

The protein resides in the cytoplasm. It carries out the reaction L-methionine + ATP + H2O = S-adenosyl-L-methionine + phosphate + diphosphate. Its pathway is amino-acid biosynthesis; S-adenosyl-L-methionine biosynthesis; S-adenosyl-L-methionine from L-methionine: step 1/1. Its function is as follows. Catalyzes the formation of S-adenosylmethionine from methionine and ATP. The reaction comprises two steps that are both catalyzed by the same enzyme: formation of S-adenosylmethionine (AdoMet) and triphosphate, and subsequent hydrolysis of the triphosphate. The polypeptide is S-adenosylmethionine synthase (SAMS) (Phaseolus lunatus (Lima bean)).